The chain runs to 237 residues: Orotidine 5'-phosphate decarboxylase (237 aa).

Residues Asp-11, Lys-34, 61-70 (DLKLHDIPNT), Thr-124, Arg-186, Gln-195, Gly-215, and Arg-216 each bind substrate. The active-site Proton donor is Lys-63.

The protein belongs to the OMP decarboxylase family. Type 1 subfamily. Homodimer.

It carries out the reaction orotidine 5'-phosphate + H(+) = UMP + CO2. It participates in pyrimidine metabolism; UMP biosynthesis via de novo pathway; UMP from orotate: step 2/2. Its function is as follows. Catalyzes the decarboxylation of orotidine 5'-monophosphate (OMP) to uridine 5'-monophosphate (UMP). The protein is Orotidine 5'-phosphate decarboxylase of Lactococcus lactis subsp. cremoris (strain MG1363).